Here is a 166-residue protein sequence, read N- to C-terminus: MSEPTSRRPAYARLLDRAVRILAVRDHSEQELRRKLSAPVMGKNGPEEIDATADDYERVIAWFHEHHYLDDERFVMRFIASRSRKGYGPARIRQELNQKGISRESTEKAMRECEIDWSEMAREQAVRKYGEPLPSNFSEKVKVQRFLLYRGYLMDDIQQIWRNFAD.

It belongs to the RecX family.

The protein localises to the cytoplasm. Modulates RecA activity. The chain is Regulatory protein RecX from Salmonella paratyphi A (strain ATCC 9150 / SARB42).